The following is a 113-amino-acid chain: Large ribosomal subunit protein uL22 (113 aa).

It belongs to the universal ribosomal protein uL22 family. In terms of assembly, part of the 50S ribosomal subunit.

Its function is as follows. This protein binds specifically to 23S rRNA; its binding is stimulated by other ribosomal proteins, e.g. L4, L17, and L20. It is important during the early stages of 50S assembly. It makes multiple contacts with different domains of the 23S rRNA in the assembled 50S subunit and ribosome. Functionally, the globular domain of the protein is located near the polypeptide exit tunnel on the outside of the subunit, while an extended beta-hairpin is found that lines the wall of the exit tunnel in the center of the 70S ribosome. The protein is Large ribosomal subunit protein uL22 of Desulforudis audaxviator (strain MP104C).